A 631-amino-acid chain; its full sequence is Nucleoside triphosphatase I (631 aa).

One can recognise a Helicase ATP-binding domain in the interval 42-204 (FLGLDSMHSL…TMLVNLLRPG (163 aa)). 55 to 62 (HETGVGKT) contacts ATP. A DEXH box motif is present at residues 141–144 (DECH). Residues 367-532 (KFIDVCLGIL…EFVQLFRVFK (166 aa)) enclose the Helicase C-terminal domain. Residues 457–524 (DIFILDMTWN…EIIQSKSKEF (68 aa)) form a binding to the cap-specific mRNA (nucleoside-2'-O-)-methyltransferase region.

Belongs to the helicase family. NPH I subfamily. Monomer. Interacts (via C-terminus) with RAP94/OPG109 (via N-terminus). Interacts with the cap-specific mRNA (nucleoside-2'-O-)-methyltransferase OPG102.

It is found in the virion. It carries out the reaction a ribonucleoside 5'-triphosphate + H2O = a ribonucleoside 5'-diphosphate + phosphate + H(+). Its function is as follows. DNA-dependent ATPase that acts as a 5' to 3' translocase on single-stranded DNA and thereby plays a role in transcription termination of viral early genes. Uses forward translocation in concert with the viral RNA polymerase RAP94/OPG109 subunit and the capping enzyme/VTF to catalyze release of UUUUUNU-containing nascent RNA from the elongation complex. In addition, acts as a positive elongation factor to assist transcription through problematic sequences. The chain is Nucleoside triphosphatase I (OPG123) from Vaccinia virus (strain Copenhagen) (VACV).